Here is a 379-residue protein sequence, read N- to C-terminus: ATP phosphoribosyltransferase regulatory subunit (379 aa).

Belongs to the class-II aminoacyl-tRNA synthetase family. HisZ subfamily. Heteromultimer composed of HisG and HisZ subunits.

The protein localises to the cytoplasm. It participates in amino-acid biosynthesis; L-histidine biosynthesis; L-histidine from 5-phospho-alpha-D-ribose 1-diphosphate: step 1/9. Functionally, required for the first step of histidine biosynthesis. May allow the feedback regulation of ATP phosphoribosyltransferase activity by histidine. This Gluconobacter oxydans (strain 621H) (Gluconobacter suboxydans) protein is ATP phosphoribosyltransferase regulatory subunit.